The sequence spans 384 residues: 1-deoxy-D-xylulose 5-phosphate reductoisomerase (384 aa).

NADPH contacts are provided by Thr10, Gly11, Ser12, Ile13, Asn38, and Asn120. Lys121 is a 1-deoxy-D-xylulose 5-phosphate binding site. An NADPH-binding site is contributed by Glu122. Residue Asp146 coordinates Mn(2+). Ser147, Glu148, Ser172, and His195 together coordinate 1-deoxy-D-xylulose 5-phosphate. A Mn(2+)-binding site is contributed by Glu148. Gly201 is a binding site for NADPH. Residues Ser208, Asn213, Lys214, and Glu217 each contribute to the 1-deoxy-D-xylulose 5-phosphate site. A Mn(2+)-binding site is contributed by Glu217.

The protein belongs to the DXR family. The cofactor is Mg(2+). Requires Mn(2+) as cofactor.

It catalyses the reaction 2-C-methyl-D-erythritol 4-phosphate + NADP(+) = 1-deoxy-D-xylulose 5-phosphate + NADPH + H(+). The protein operates within isoprenoid biosynthesis; isopentenyl diphosphate biosynthesis via DXP pathway; isopentenyl diphosphate from 1-deoxy-D-xylulose 5-phosphate: step 1/6. Functionally, catalyzes the NADPH-dependent rearrangement and reduction of 1-deoxy-D-xylulose-5-phosphate (DXP) to 2-C-methyl-D-erythritol 4-phosphate (MEP). This Protochlamydia amoebophila (strain UWE25) protein is 1-deoxy-D-xylulose 5-phosphate reductoisomerase.